The sequence spans 344 residues: DNA-directed RNA polymerase subunit alpha (344 aa).

Residues 1–239 (MADHWNKLTR…DQLQSFISFD (239 aa)) form an alpha N-terminal domain (alpha-NTD) region. The interval 254–344 (VLPYDHNLLR…ENLSKQYSED (91 aa)) is alpha C-terminal domain (alpha-CTD).

The protein belongs to the RNA polymerase alpha chain family. Homodimer. The RNAP catalytic core consists of 2 alpha, 1 beta, 1 beta' and 1 omega subunit. When a sigma factor is associated with the core the holoenzyme is formed, which can initiate transcription.

It catalyses the reaction RNA(n) + a ribonucleoside 5'-triphosphate = RNA(n+1) + diphosphate. Its function is as follows. DNA-dependent RNA polymerase catalyzes the transcription of DNA into RNA using the four ribonucleoside triphosphates as substrates. This Anaplasma phagocytophilum (strain HZ) protein is DNA-directed RNA polymerase subunit alpha.